The primary structure comprises 384 residues: Polyketide synthase BAS (384 aa).

Cys157 functions as the Nucleophile and monoketide coumarate intermediate in the catalytic mechanism. At Cys157 the chain carries S-(4-hydroxycinnamyl)cysteine.

It belongs to the thiolase-like superfamily. Chalcone/stilbene synthases family. Homodimer.

It catalyses the reaction 4-coumaroyl-CoA + malonyl-CoA + H2O + H(+) = 4-hydroxybenzalacetone + 2 CO2 + 2 CoA. It participates in secondary metabolite biosynthesis; flavonoid biosynthesis. Its function is as follows. Polyketide synthase producing 4-hydroxybenzalacetone. Can use p-coumaryl-CoA as substrate but does not accept hexanoyl-CoA, isobutyryl-CoA, isovaleryl-CoA, and acetyl-CoA as a substrates. Catalyzes the initial key reaction step in the biosynthesis of phenylbutanoids. This chain is Polyketide synthase BAS (BAS), found in Rheum palmatum (Chinese rhubarb).